A 502-amino-acid chain; its full sequence is ATP synthase subunit alpha (502 aa).

169–176 (GDRQTGKT) is an ATP binding site.

It belongs to the ATPase alpha/beta chains family. As to quaternary structure, F-type ATPases have 2 components, CF(1) - the catalytic core - and CF(0) - the membrane proton channel. CF(1) has five subunits: alpha(3), beta(3), gamma(1), delta(1), epsilon(1). CF(0) has three main subunits: a(1), b(2) and c(9-12). The alpha and beta chains form an alternating ring which encloses part of the gamma chain. CF(1) is attached to CF(0) by a central stalk formed by the gamma and epsilon chains, while a peripheral stalk is formed by the delta and b chains.

The protein localises to the cell inner membrane. It catalyses the reaction ATP + H2O + 4 H(+)(in) = ADP + phosphate + 5 H(+)(out). In terms of biological role, produces ATP from ADP in the presence of a proton gradient across the membrane. The alpha chain is a regulatory subunit. The chain is ATP synthase subunit alpha from Geobacter sp. (strain M21).